The chain runs to 145 residues: AP-2 complex subunit sigma (145 aa).

This sequence belongs to the adaptor complexes small subunit family. In terms of assembly, adaptor protein complex 2 (AP-2) is a heterotetramer composed of two large adaptins (alpha-type subunit apl3 and beta-type subunit apl1), a medium chain (mu-type subunit apm4) and a small adaptin (sigma-type subunit aps2).

The protein localises to the cell membrane. The protein resides in the membrane. It is found in the coated pit. Functionally, component of the adaptor complexes which link clathrin to receptors in coated vesicles. Clathrin-associated protein complexes are believed to interact with the cytoplasmic tails of membrane proteins, leading to their selection and concentration. The protein is AP-2 complex subunit sigma (aps2) of Aspergillus fumigatus (strain ATCC MYA-4609 / CBS 101355 / FGSC A1100 / Af293) (Neosartorya fumigata).